A 293-amino-acid polypeptide reads, in one-letter code: 4-hydroxy-tetrahydrodipicolinate synthase (293 aa).

Threonine 44 lines the pyruvate pocket. Tyrosine 132 acts as the Proton donor/acceptor in catalysis. Lysine 162 acts as the Schiff-base intermediate with substrate in catalysis. Isoleucine 204 provides a ligand contact to pyruvate.

Belongs to the DapA family. In terms of assembly, homotetramer; dimer of dimers.

It localises to the cytoplasm. The enzyme catalyses L-aspartate 4-semialdehyde + pyruvate = (2S,4S)-4-hydroxy-2,3,4,5-tetrahydrodipicolinate + H2O + H(+). It participates in amino-acid biosynthesis; L-lysine biosynthesis via DAP pathway; (S)-tetrahydrodipicolinate from L-aspartate: step 3/4. Its function is as follows. Catalyzes the condensation of (S)-aspartate-beta-semialdehyde [(S)-ASA] and pyruvate to 4-hydroxy-tetrahydrodipicolinate (HTPA). The protein is 4-hydroxy-tetrahydrodipicolinate synthase of Erythrobacter litoralis (strain HTCC2594).